Consider the following 298-residue polypeptide: HTH-type transcriptional regulator ArgP (298 aa).

Positions 4-60 (LDYKWIEALDAVVAQGGFERAAEELYISQSAVSQRIKQLERFLAQSVLIREQPPKPT) constitute an HTH lysR-type domain. Positions 21-40 (FERAAEELYISQSAVSQRIK) form a DNA-binding region, H-T-H motif.

Belongs to the LysR transcriptional regulatory family. As to quaternary structure, homodimer.

Functionally, controls the transcription of genes involved in arginine and lysine metabolism. In Vibrio vulnificus (strain YJ016), this protein is HTH-type transcriptional regulator ArgP.